A 217-amino-acid chain; its full sequence is Ribosomal large subunit pseudouridine synthase E (217 aa).

Residue D79 is the Nucleophile of the active site.

It belongs to the pseudouridine synthase RsuA family.

The enzyme catalyses uridine(2457) in 23S rRNA = pseudouridine(2457) in 23S rRNA. Its function is as follows. Responsible for synthesis of pseudouridine from uracil-2457 in 23S ribosomal RNA. In Escherichia coli O6:H1 (strain CFT073 / ATCC 700928 / UPEC), this protein is Ribosomal large subunit pseudouridine synthase E (rluE).